Here is a 421-residue protein sequence, read N- to C-terminus: Polymerase delta-interacting protein 3 (421 aa).

At Ala-2 the chain carries N-acetylalanine. Residue Ser-5 is modified to Phosphoserine. The residue at position 33 (Arg-33) is an Omega-N-methylarginine. A phosphoserine mark is found at Ser-44 and Ser-127. At Thr-140 the chain carries Phosphothreonine. Lys-200 participates in a covalent cross-link: Glycyl lysine isopeptide (Lys-Gly) (interchain with G-Cter in SUMO2). Residues Ser-204, Ser-215, and Ser-217 each carry the phosphoserine modification. Residue Lys-223 forms a Glycyl lysine isopeptide (Lys-Gly) (interchain with G-Cter in SUMO2) linkage. A Phosphoserine modification is found at Ser-244. Residue Lys-248 forms a Glycyl lysine isopeptide (Lys-Gly) (interchain with G-Cter in SUMO2) linkage. Ser-275 carries the post-translational modification Phosphoserine. The RRM domain maps to 280–351; sequence TKMTVNNLHP…QPMKCNLHMN (72 aa). Over residues 370–379 the composition is skewed to basic and acidic residues; the sequence is SMKKESELPR. Residues 370 to 393 form a disordered region; it reads SMKKESELPRRVNSASSSNPPAEV. Lys-372 participates in a covalent cross-link: Glycyl lysine isopeptide (Lys-Gly) (interchain with G-Cter in SUMO2). 2 positions are modified to phosphoserine; by RPS6KB1: Ser-383 and Ser-385. Residue Lys-418 forms a Glycyl lysine isopeptide (Lys-Gly) (interchain with G-Cter in SUMO2) linkage.

As to quaternary structure, interacts with POLD2. Interacts with NCBP1 and EIF4A3. Associates with the multiprotein exon junction complex (EJC). Interacts with RPS6KB1 (activated). Interacts with ERH. Interacts with THOC2, DDX39B and ZC3H11A; the interactions are ATP-dependent and indicative for an association with the TREX complex. Post-translationally, phosphorylated at Ser-383 and Ser-385 by RPS6KB1.

It is found in the nucleus. It localises to the nucleus speckle. The protein localises to the cytoplasm. Its function is as follows. Is involved in regulation of translation. Is preferentially associated with CBC-bound spliced mRNA-protein complexes during the pioneer round of mRNA translation. Contributes to enhanced translational efficiency of spliced over nonspliced mRNAs. Recruits activated ribosomal protein S6 kinase beta-1 I/RPS6KB1 to newly synthesized mRNA. Involved in nuclear mRNA export; probably mediated by association with the TREX complex. This is Polymerase delta-interacting protein 3 (POLDIP3) from Homo sapiens (Human).